The sequence spans 125 residues: S-adenosylmethionine decarboxylase proenzyme (125 aa).

Residue S71 is the Schiff-base intermediate with substrate; via pyruvic acid of the active site. Pyruvic acid (Ser); by autocatalysis is present on S71. The active-site Proton acceptor; for processing activity is the H76. The active-site Proton donor; for catalytic activity is C91.

Belongs to the prokaryotic AdoMetDC family. Type 1 subfamily. In terms of assembly, heterotetramer of two alpha and two beta chains arranged as a dimer of alpha/beta heterodimers. Pyruvate serves as cofactor. Post-translationally, is synthesized initially as an inactive proenzyme. Formation of the active enzyme involves a self-maturation process in which the active site pyruvoyl group is generated from an internal serine residue via an autocatalytic post-translational modification. Two non-identical subunits are generated from the proenzyme in this reaction, and the pyruvate is formed at the N-terminus of the alpha chain, which is derived from the carboxyl end of the proenzyme. The post-translation cleavage follows an unusual pathway, termed non-hydrolytic serinolysis, in which the side chain hydroxyl group of the serine supplies its oxygen atom to form the C-terminus of the beta chain, while the remainder of the serine residue undergoes an oxidative deamination to produce ammonia and the pyruvoyl group blocking the N-terminus of the alpha chain.

The catalysed reaction is S-adenosyl-L-methionine + H(+) = S-adenosyl 3-(methylsulfanyl)propylamine + CO2. It participates in amine and polyamine biosynthesis; S-adenosylmethioninamine biosynthesis; S-adenosylmethioninamine from S-adenosyl-L-methionine: step 1/1. In terms of biological role, catalyzes the decarboxylation of S-adenosylmethionine to S-adenosylmethioninamine (dcAdoMet), the propylamine donor required for the synthesis of the polyamines spermine and spermidine from the diamine putrescine. In Pyrobaculum arsenaticum (strain DSM 13514 / JCM 11321 / PZ6), this protein is S-adenosylmethionine decarboxylase proenzyme.